The chain runs to 309 residues: ADP,ATP carrier protein 1 (309 aa).

Solcar repeat units lie at residues 11–104 (SHFG…IKSL), 116–208 (KWFA…FKPV), and 216–302 (GSFV…LQLI). Helical transmembrane passes span 13–40 (FGVDFLMGGVSAAIAKTGAAPIERVKLL), 81–105 (TANVLRYFPTQALNFAFKDKIKSLL), 114–134 (YAKWFAGNLFSGGAAGGLSLL), 184–205 (FVPSVLGIIVYRGLYFGLYDSF), and 219–239 (VASFLLGWVITMGASTASYPL). ADP is bound by residues Arg-86 and Lys-98. ADP is bound at residue Arg-243. The interval 243–248 (RRRMMM) is important for transport activity. Positions 243–248 (RRRMMM) match the Nucleotide carrier signature motif motif. The chain crosses the membrane as a helical span at residues 279 to 299 (CGANIFRGVAAAGVISLYDQL).

It belongs to the mitochondrial carrier (TC 2.A.29) family. As to quaternary structure, monomer.

The protein resides in the mitochondrion inner membrane. It carries out the reaction ADP(in) + ATP(out) = ADP(out) + ATP(in). With respect to regulation, the matrix-open state (m-state) is inhibited by the membrane-permeable bongkrekic acid (BKA). The cytoplasmic-open state (c-state) is inhibited by the membrane-impermeable toxic inhibitor carboxyatractyloside (CATR). ADP:ATP antiporter that mediates import of ADP into the mitochondrial matrix for ATP synthesis, and export of ATP out to fuel the cell. Cycles between the cytoplasmic-open state (c-state) and the matrix-open state (m-state): operates by the alternating access mechanism with a single substrate-binding site intermittently exposed to either the cytosolic (c-state) or matrix (m-state) side of the inner mitochondrial membrane. The protein is ADP,ATP carrier protein 1 (AAC1) of Saccharomyces cerevisiae (strain ATCC 204508 / S288c) (Baker's yeast).